The following is a 936-amino-acid chain: Intimin (936 aa).

The first 41 residues, 1–41, serve as a signal peptide directing secretion; sequence MIIHGFCTGTRHKHKLRKTFIMLGAGLGLFFSVNQNSFANG. The 50-residue stretch at 63–112 folds into the LysM domain; that stretch reads LFYTLKTGESVAQLSKSQGISVPVIWSLNKHLYSSESEMMKASPGQQIIL. 2 consecutive Big-1 domains span residues 557-650 and 657-748; these read ITNF…VIFV and ITEI…VEFF. Residues 780 to 831 enclose the BIG2 domain; the sequence is KLQATGGNGKYTWKSSNTKIASVDNSGVITLNEKGSATITVVSGDNQSATYT. Cysteine 857 and cysteine 934 are joined by a disulfide.

This sequence belongs to the intimin/invasin family.

Its subcellular location is the cell outer membrane. An inverse autotransporter. This is Intimin (eae) from Citrobacter freundii.